We begin with the raw amino-acid sequence, 414 residues long: L-cysteine:1D-myo-inositol 2-amino-2-deoxy-alpha-D-glucopyranoside ligase (414 aa).

Positions M1 to R38 are disordered. Residues N11–R38 show a composition bias toward low complexity. C48 serves as a coordination point for Zn(2+). L-cysteinyl-5'-AMP-binding positions include C48–T51, T63, and N86–T88. The 'HIGH' region motif lies at I50–H60. The 'ERGGDP' region signature appears at E188 to P193. W228 lines the L-cysteinyl-5'-AMP pocket. Residue C232 coordinates Zn(2+). G250–D252 serves as a coordination point for L-cysteinyl-5'-AMP. H257 contacts Zn(2+). An L-cysteinyl-5'-AMP-binding site is contributed by V284. Residues K290–S294 carry the 'KMSKS' region motif.

Belongs to the class-I aminoacyl-tRNA synthetase family. MshC subfamily. Monomer. Requires Zn(2+) as cofactor.

It catalyses the reaction 1D-myo-inositol 2-amino-2-deoxy-alpha-D-glucopyranoside + L-cysteine + ATP = 1D-myo-inositol 2-(L-cysteinylamino)-2-deoxy-alpha-D-glucopyranoside + AMP + diphosphate + H(+). Its function is as follows. Catalyzes the ATP-dependent condensation of GlcN-Ins and L-cysteine to form L-Cys-GlcN-Ins. The polypeptide is L-cysteine:1D-myo-inositol 2-amino-2-deoxy-alpha-D-glucopyranoside ligase (Thermomonospora curvata (strain ATCC 19995 / DSM 43183 / JCM 3096 / KCTC 9072 / NBRC 15933 / NCIMB 10081 / Henssen B9)).